The primary structure comprises 578 residues: Sulfite reductase [NADPH] hemoprotein beta-component (578 aa).

Residues 1–21 (MTNTLAGPDRSRDISQPLEKL) form a disordered region. [4Fe-4S] cluster is bound by residues cysteine 443, cysteine 449, cysteine 488, and cysteine 492. Siroheme is bound at residue cysteine 492.

Belongs to the nitrite and sulfite reductase 4Fe-4S domain family. In terms of assembly, alpha(8)-beta(8). The alpha component is a flavoprotein, the beta component is a hemoprotein. It depends on siroheme as a cofactor. [4Fe-4S] cluster is required as a cofactor.

It catalyses the reaction hydrogen sulfide + 3 NADP(+) + 3 H2O = sulfite + 3 NADPH + 4 H(+). It participates in sulfur metabolism; hydrogen sulfide biosynthesis; hydrogen sulfide from sulfite (NADPH route): step 1/1. In terms of biological role, component of the sulfite reductase complex that catalyzes the 6-electron reduction of sulfite to sulfide. This is one of several activities required for the biosynthesis of L-cysteine from sulfate. The chain is Sulfite reductase [NADPH] hemoprotein beta-component from Methylocella silvestris (strain DSM 15510 / CIP 108128 / LMG 27833 / NCIMB 13906 / BL2).